We begin with the raw amino-acid sequence, 419 residues long: Histidine--tRNA ligase (419 aa).

This sequence belongs to the class-II aminoacyl-tRNA synthetase family. In terms of assembly, homodimer.

It is found in the cytoplasm. It carries out the reaction tRNA(His) + L-histidine + ATP = L-histidyl-tRNA(His) + AMP + diphosphate + H(+). The sequence is that of Histidine--tRNA ligase from Novosphingobium aromaticivorans (strain ATCC 700278 / DSM 12444 / CCUG 56034 / CIP 105152 / NBRC 16084 / F199).